The chain runs to 1347 residues: MDLLSGTYIFAVLLACVVFHSGAQEKNYTIREEMPENVLIGDLLKDLNLSLIPNKSLTTAMQFKLVYKTGDVPLIRIEEDTGEIFTTGARIDREKLCAGIPRDEHCFYEVEVAILPDEIFRLVKIRFLIEDINDNAPLFPATVINISIPENSAINSKYTLPAAVDPDVGINGVQNYELIKSQNIFGLDVIETPEGDKMPQLIVQKELDREEKDTYVMKVKVEDGGFPQRSSTAILQVSVTDTNDNHPVFKETEIEVSIPENAPVGTSVTQLHATDADIGENAKIHFSFSNLVSNIARRLFHLNATTGLITIKEPLDREETPNHKLLVLASDGGLMPARAMVLVNVTDVNDNVPSIDIRYIVNPVNDTVVLSENIPLNTKIALITVTDKDADHNGRVTCFTDHEIPFRLRPVFSNQFLLETAAYLDYESTKEYAIKLLAADAGKPPLNQSAMLFIKVKDENDNAPVFTQSFVTVSIPENNSPGIQLTKVSAMDADSGPNAKINYLLGPDAPPEFSLDCRTGMLTVVKKLDREKEDKYLFTILAKDNGVPPLTSNVTVFVSIIDQNDNSPVFTHNEYNFYVPENLPRHGTVGLITVTDPDYGDNSAVTLSILDENDDFTIDSQTGVIRPNISFDREKQESYTFYVKAEDGGRVSRSSSAKVTINVVDVNDNKPVFIVPPSNCSYELVLPSTNPGTVVFQVIAVDNDTGMNAEVRYSIVGGNTRDLFAIDQETGNITLMEKCDVTDLGLHRVLVKANDLGQPDSLFSVVIVNLFVNESVTNATLINELVRKSTEAPVTPNTEIADVSSPTSDYVKILVAAVAGTITVVVVIFITAVVRCRQAPHLKAAQKNKQNSEWATPNPENRQMIMMKKKKKKKKHSPKNLLLNFVTIEETKADDVDSDGNRVTLDLPIDLEEQTMGKYNWVTTPTTFKPDSPDLARHYKSASPQPAFQIQPETPLNSKHHIIQELPLDNTFVACDSISKCSSSSSDPYSVSDCGYPVTTFEVPVSVHTRPPMKEVVRSCTPMKESTTMEIWIHPQPQRKSEGKVAGKSQRRVTFHLPEGSQESSSDGGLGDHDAGSLTSTSHGLPLGYPQEEYFDRATPSNRTEGDGNSDPESTFIPGLKKAAEITVQPTVEEASDNCTQECLIYGHSDACWMPASLDHSSSSQAQASALCHSPPLSQASTQHHSPRVTQTIALCHSPPVTQTIALCHSPPPIQVSALHHSPPLVQATALHHSPPSAQASALCYSPPLAQAAAISHSSPLPQVIALHRSQAQSSVSLQQGWVQGADGLCSVDQGVQGSATSQFYTMSERLHPSDDSIKVIPLTTFTPRQQARPSRGDSPIMEEHPL.

An N-terminal signal peptide occupies residues Met-1–Ala-23. The Extracellular segment spans residues Gln-24–Lys-812. Cadherin domains lie at Lys-26–Phe-139, Pro-140–Phe-249, Lys-250–Ile-355, Asn-362–Phe-466, Thr-467–Phe-570, Thr-571–Phe-673, and Pro-677–Thr-795. Asn-27, Asn-48, and Asn-54 each carry an N-linked (GlcNAc...) asparagine glycan. Residue Asn-344 is glycosylated (N-linked (GlcNAc...) asparagine). Residue Asn-553 is glycosylated (N-linked (GlcNAc...) asparagine). A glycan (N-linked (GlcNAc...) asparagine) is linked at Asn-773. Residues Ile-813–Val-833 traverse the membrane as a helical segment. The Cytoplasmic portion of the chain corresponds to Val-834 to Leu-1347. 3 disordered regions span residues Leu-1057–Gln-1091, Arg-1097–Phe-1116, and Phe-1326–Leu-1347.

Expressed strongly in fetal brain and brain (cortex, amygdala, thalamus, substantia nigra, hippocampus, caudate nucleus and corpus callosum). Expressed at low level in testis.

The protein resides in the cell membrane. Potential calcium-dependent cell-adhesion protein. The polypeptide is Protocadherin-11 X-linked (PCDH11X) (Homo sapiens (Human)).